Here is a 516-residue protein sequence, read N- to C-terminus: Polyprenol-phosphate-mannose--protein mannosyltransferase (516 aa).

A run of 9 helical transmembrane segments spans residues 113–133 (YNGL…VMLV), 143–163 (STLV…SFVS), 166–186 (TALL…CLMV), 234–254 (WSGL…DAIA), 275–295 (AAYV…APWF), 384–404 (VMLV…GWAL), 413–433 (WRYG…FADI), 437–457 (MYFF…ALIL), and 473–493 (LGLL…AWMY).

Belongs to the glycosyltransferase 39 family.

It is found in the cell membrane. Its pathway is protein modification; protein glycosylation. Functionally, protein O-mannosyltransferase that catalyzes the transfer of a single mannose residue from a polyprenol phospho-mannosyl lipidic donor to the hydroxyl group of selected serine and threonine residues in acceptor proteins. This chain is Polyprenol-phosphate-mannose--protein mannosyltransferase, found in Mycolicibacterium smegmatis (strain ATCC 700084 / mc(2)155) (Mycobacterium smegmatis).